The primary structure comprises 590 residues: Negative elongation factor D (590 aa).

Positions 15–43 (YGSAAEWGDEADGGQQEDDSGEGEDDAEV) are disordered. Residues 21–43 (WGDEADGGQQEDDSGEGEDDAEV) show a composition bias toward acidic residues.

The protein belongs to the NELF-D family. As to quaternary structure, the NELF complex is composed of NELFA, NELFB, NELFCD and NELFE; NELFA and NELFCD form a stable subcomplex that binds primarily through NELFCD to the N-terminus of NELFB. Binds RNA which may help to stabilize the NELF complex on nucleic acid. In vitro, the NELFA:NELFCD subcomplex binds to ssDNA and ssRNA in a sequence- and structure-dependent manner. Interacts with ARAF1. Interacts with PCF11. Interacts with NELFB. Interacts with KAT8.

Its subcellular location is the nucleus. Essential component of the NELF complex, a complex that negatively regulates the elongation of transcription by RNA polymerase II. The NELF complex, which acts via an association with the DSIF complex and causes transcriptional pausing, is counteracted by the P-TEFb kinase complex. The protein is Negative elongation factor D (NELFCD) of Pongo abelii (Sumatran orangutan).